Reading from the N-terminus, the 487-residue chain is N-succinylglutamate 5-semialdehyde dehydrogenase (487 aa).

NAD(+) is bound at residue glycine 221–glycine 226. Active-site residues include glutamate 244 and cysteine 278.

It belongs to the aldehyde dehydrogenase family. AstD subfamily.

It catalyses the reaction N-succinyl-L-glutamate 5-semialdehyde + NAD(+) + H2O = N-succinyl-L-glutamate + NADH + 2 H(+). It functions in the pathway amino-acid degradation; L-arginine degradation via AST pathway; L-glutamate and succinate from L-arginine: step 4/5. Its function is as follows. Catalyzes the NAD-dependent reduction of succinylglutamate semialdehyde into succinylglutamate. The sequence is that of N-succinylglutamate 5-semialdehyde dehydrogenase from Paraburkholderia xenovorans (strain LB400).